The primary structure comprises 223 residues: Uridylate kinase (223 aa).

9–10 (GS) is a binding site for ATP. Glycine 43 is a binding site for UMP. 2 residues coordinate ATP: glycine 44 and arginine 48. UMP is bound by residues aspartate 65 and 112-118 (THPGHTT). Threonine 137, asparagine 138, tyrosine 143, and aspartate 146 together coordinate ATP.

The protein belongs to the UMP kinase family. As to quaternary structure, homohexamer.

Its subcellular location is the cytoplasm. It carries out the reaction UMP + ATP = UDP + ADP. Its pathway is pyrimidine metabolism; CTP biosynthesis via de novo pathway; UDP from UMP (UMPK route): step 1/1. Its activity is regulated as follows. Inhibited by UTP. Its function is as follows. Catalyzes the reversible phosphorylation of UMP to UDP. In Methanopyrus kandleri (strain AV19 / DSM 6324 / JCM 9639 / NBRC 100938), this protein is Uridylate kinase.